The primary structure comprises 59 residues: Large ribosomal subunit protein uL30 (59 aa).

Belongs to the universal ribosomal protein uL30 family. In terms of assembly, part of the 50S ribosomal subunit.

This chain is Large ribosomal subunit protein uL30, found in Citrobacter koseri (strain ATCC BAA-895 / CDC 4225-83 / SGSC4696).